The following is a 142-amino-acid chain: Large ribosomal subunit protein uL13 (142 aa).

The protein belongs to the universal ribosomal protein uL13 family. Part of the 50S ribosomal subunit.

Functionally, this protein is one of the early assembly proteins of the 50S ribosomal subunit, although it is not seen to bind rRNA by itself. It is important during the early stages of 50S assembly. This Stenotrophomonas maltophilia (strain K279a) protein is Large ribosomal subunit protein uL13.